The chain runs to 392 residues: uncharacterized protein (392 aa).

Belongs to the glycosyltransferase group 1 family. Glycosyltransferase 4 subfamily.

This is an uncharacterized protein from Methanocaldococcus jannaschii (strain ATCC 43067 / DSM 2661 / JAL-1 / JCM 10045 / NBRC 100440) (Methanococcus jannaschii).